Consider the following 79-residue polypeptide: Hematopoietic cell signal transducer (79 aa).

Residues 1–18 (MAPPGHLLFLFLLPVAAS) form the signal peptide. At 19-35 (QTNEGSCSGCGPLSLPL) the chain is on the extracellular side. The helical transmembrane segment at 36–56 (LAGLVAADAVMSLLIVGVVFV) threads the bilayer. Over 57–79 (CMRLHSRPAQEDGRVYINMPGRG) the chain is Cytoplasmic. Y72 is subject to Phosphotyrosine. The tract at residues 72–74 (YIN) is GRB2 binding site. The tract at residues 72 to 75 (YINM) is PIK3R1 binding site.

The protein belongs to the DAP10 family. As to quaternary structure, homodimer; Disulfide-linked. Heterohexamer composed of four subunits of HCST/DAP10 and two subunits of KLRK1. Interacts (via transmembrane domain) with KLRK1 (via transmembrane domain); the interaction is required for KLRK1 NK cell surface and induces NK cell-mediated cytotoxicity. Interacts with PIK3R1 and GRB2. Interacts with CLEC5A. Forms an CLEC5A/TYROBP/HCST trimolecular complex depending almost solely on TYROBP. Interacts with CD300H. In terms of processing, phosphorylated; PIK3R1 and GRB2 associate specifically with tyrosine-phosphorylated HCST. O-glycosylated.

The protein resides in the membrane. In terms of biological role, transmembrane adapter protein which associates with KLRK1 to form an activation receptor KLRK1-HCST in lymphoid and myeloid cells; this receptor plays a major role in triggering cytotoxicity against target cells expressing cell surface ligands such as MHC class I chain-related MICA and MICB, and UL16-binding proteins (ULBPs); these ligands are up-regulated by stress conditions and pathological state such as viral infection and tumor transformation. Functions as a docking site for PI3-kinase PIK3R1 and GRB2. Interaction of ULBPs with KLRK1-HCST triggers calcium mobilization and activation of the PIK3R1, MAP2K/ERK, and JAK2/STAT5 signaling pathways. Both PIK3R1 and GRB2 are required for full KLRK1-HCST-mediated activation and ultimate killing of target cells. In NK cells, KLRK1-HCST signaling directly induces cytotoxicity and enhances cytokine production initiated via DAP12/TYROBP-associated receptors. In T-cells, it provides primarily costimulation for TCR-induced signals. KLRK1-HCST receptor plays a role in immune surveillance against tumors and is required for cytolysis of tumors cells; indeed, melanoma cells that do not express KLRK1 ligands escape from immune surveillance mediated by NK cells. The sequence is that of Hematopoietic cell signal transducer (Hcst) from Rattus norvegicus (Rat).